The primary structure comprises 317 residues: Beta-ketoacyl-[acyl-carrier-protein] synthase III (317 aa).

Active-site residues include C112 and H244. The segment at 245 to 249 (QANLR) is ACP-binding. Residue N274 is part of the active site.

It belongs to the thiolase-like superfamily. FabH family. In terms of assembly, homodimer.

The protein localises to the cytoplasm. It carries out the reaction malonyl-[ACP] + acetyl-CoA + H(+) = 3-oxobutanoyl-[ACP] + CO2 + CoA. The protein operates within lipid metabolism; fatty acid biosynthesis. Its function is as follows. Catalyzes the condensation reaction of fatty acid synthesis by the addition to an acyl acceptor of two carbons from malonyl-ACP. Catalyzes the first condensation reaction which initiates fatty acid synthesis and may therefore play a role in governing the total rate of fatty acid production. Possesses both acetoacetyl-ACP synthase and acetyl transacylase activities. Its substrate specificity determines the biosynthesis of branched-chain and/or straight-chain of fatty acids. The polypeptide is Beta-ketoacyl-[acyl-carrier-protein] synthase III (Salmonella paratyphi A (strain ATCC 9150 / SARB42)).